A 233-amino-acid chain; its full sequence is MGAGANNHEESSPLIPAAVAAPAYEKPPQAPAPEAANYYADGVPVVMGEPVSAHAFGGVPRESWNSGILSCLGRNDEFCSSDVEVCLLGTVAPCVLYGSNVERLAAGQGTFANSCLPYTGLYLLGNSLFGWNCLAPWFSHPTRTAIRQRYNLEGSFEAFTRQCGCCGDLVEDEERREHLEAACDLATHYLCHPCALCQEGRELRRRVPHPGFNNGHSVFVMMPPMEQTMGRGM.

Transmembrane regions (helical) follow at residues 85 to 101 and 115 to 138; these read VCLL…GSNV and CLPY…APWF.

It belongs to the cornifelin family. In terms of tissue distribution, expressed in roots, coleoptiles, leaves, stalks, apical meristems, immature ears, embryos, endosperm, pericarp, silks, tassel spikelets and pollen. Highest expression in the pericarp and stalks.

It is found in the membrane. This chain is Cell number regulator 8 (CNR8), found in Zea mays (Maize).